We begin with the raw amino-acid sequence, 557 residues long: Urocanate hydratase (557 aa).

Positions 1–20 (MSNPRHNEREVRSPRGDELN) are disordered. Residues 52–53 (GG), glutamine 130, 176–178 (GMG), glutamate 196, arginine 201, 242–243 (NA), 263–267 (QTSAH), 273–274 (YL), and tyrosine 322 contribute to the NAD(+) site. Residue cysteine 410 is part of the active site. Glycine 492 contributes to the NAD(+) binding site.

It belongs to the urocanase family. Requires NAD(+) as cofactor.

Its subcellular location is the cytoplasm. The catalysed reaction is 4-imidazolone-5-propanoate = trans-urocanate + H2O. It participates in amino-acid degradation; L-histidine degradation into L-glutamate; N-formimidoyl-L-glutamate from L-histidine: step 2/3. Catalyzes the conversion of urocanate to 4-imidazolone-5-propionate. The polypeptide is Urocanate hydratase (Brucella melitensis biotype 1 (strain ATCC 23456 / CCUG 17765 / NCTC 10094 / 16M)).